The chain runs to 385 residues: 8-amino-7-oxononanoate synthase (385 aa).

Arginine 23 is a substrate binding site. Residue 110–111 participates in pyridoxal 5'-phosphate binding; that stretch reads GF. Residue histidine 135 participates in substrate binding. Pyridoxal 5'-phosphate contacts are provided by serine 180, histidine 208, and threonine 234. Position 237 is an N6-(pyridoxal phosphate)lysine (lysine 237). Threonine 350 provides a ligand contact to substrate.

This sequence belongs to the class-II pyridoxal-phosphate-dependent aminotransferase family. BioF subfamily. Homodimer. The cofactor is pyridoxal 5'-phosphate.

It carries out the reaction 6-carboxyhexanoyl-[ACP] + L-alanine + H(+) = (8S)-8-amino-7-oxononanoate + holo-[ACP] + CO2. It participates in cofactor biosynthesis; biotin biosynthesis. Catalyzes the decarboxylative condensation of pimeloyl-[acyl-carrier protein] and L-alanine to produce 8-amino-7-oxononanoate (AON), [acyl-carrier protein], and carbon dioxide. The sequence is that of 8-amino-7-oxononanoate synthase from Vibrio vulnificus (strain YJ016).